The chain runs to 218 residues: TPA-induced transmembrane protein homolog (218 aa).

The interval 1–54 is disordered; that stretch reads MEEGSRSQSPREELELSMLDGPQEELTPLNNDLRIQPNSAEDPSPAQVGKESPW. Residues 66-86 form a helical membrane-spanning segment; it reads KLWMVIVTIFLCFIIVIVISL.

The protein resides in the endoplasmic reticulum membrane. This is TPA-induced transmembrane protein homolog from Mus musculus (Mouse).